Here is a 375-residue protein sequence, read N- to C-terminus: Platelet-derived growth factor receptor-like protein (375 aa).

The N-terminal stretch at 1–17 is a signal peptide; sequence MKVWLLLGLLLLHEALG. The tract at residues 19–63 is disordered; it reads VAGQHPPKNKRPKEQGENRIKPTNKKAKPKIPKIKDRDTADSAPK. Over residues 40 to 50 the composition is skewed to basic residues; that stretch reads PTNKKAKPKIP. The 98-residue stretch at 62 to 159 folds into the Ig-like C2-type 1 domain; sequence PKSQSIMMQA…GYICRRDEAR (98 aa). A disulfide bridge links cysteine 96 with cysteine 143. Asparagine 219 carries N-linked (GlcNAc...) asparagine glycosylation. The Ig-like C2-type 2 domain maps to 272 to 375; that stretch reads PSTTILASSN…TTVATTVEFS (104 aa). Cysteine 293 and cysteine 357 are joined by a disulfide.

Forms a complex composed of PDGFRL, TNK2 and GRB2.

It localises to the secreted. The polypeptide is Platelet-derived growth factor receptor-like protein (Pdgfrl) (Rattus norvegicus (Rat)).